The chain runs to 215 residues: MHRDAWLPRPAFSLTGLSLFFSLVPSGRSMEVTVPTTLSVLNGSDTRLPCTFNSCYTVNHKQFSLNWTYQECSNCSEEMFLQFRMKIINLKLERFGDRVEFSGNPSKYDVSVTLKNVQLEDEGIYNCYITNPPDRHRGHGKIYLQVLLEVPPERDSTVAVIVGASVGGFLAVVILVLMVVKCVRRKKEQKLSTDDLKTEEEGKTDGEGNAEDGAK.

Positions 1 to 29 are cleaved as a signal peptide; the sequence is MHRDAWLPRPAFSLTGLSLFFSLVPSGRS. The Extracellular portion of the chain corresponds to 30–157; the sequence is MEVTVPTTLS…LEVPPERDST (128 aa). In terms of domain architecture, Ig-like C2-type spans 32-154; it reads VTVPTTLSVL…QVLLEVPPER (123 aa). Asparagine 42, asparagine 66, and asparagine 74 each carry an N-linked (GlcNAc...) asparagine glycan. 2 disulfide bridges follow: cysteine 50–cysteine 127 and cysteine 72–cysteine 75. Residues 158–179 form a helical membrane-spanning segment; it reads VAVIVGASVGGFLAVVILVLMV. The Cytoplasmic segment spans residues 180 to 215; sequence VKCVRRKKEQKLSTDDLKTEEEGKTDGEGNAEDGAK. Positions 187 to 215 are disordered; it reads KEQKLSTDDLKTEEEGKTDGEGNAEDGAK. The segment covering 189 to 215 has biased composition (basic and acidic residues); the sequence is QKLSTDDLKTEEEGKTDGEGNAEDGAK. Serine 192 bears the Phosphoserine mark. Threonine 204 carries the phosphothreonine modification.

It belongs to the sodium channel auxiliary subunit SCN2B (TC 8.A.17) family. In terms of assembly, a voltage-gated sodium (Nav) channel consists of an ion-conducting pore-forming alpha subunit functional on its own that is regulated by one or more beta subunits. The beta subunit SCN2B is disulfide-linked to the pore-forming alpha subunit. Interacts with SCN1A; regulatory subunit of SCN1A/Nav1.1. Interacts with SCN2A; regulatory subunit of SCN2A/Nav1.2. Interacts with SCN3A; regulatory subunit of SCN3A/Nav1.3. Interacts with SCN5A; regulatory subunit of SCN5A/Nav1.5. Interacts with SCN8A; regulatory subunit of SCN8A/Nav1.6. Interacts with SCN9A; regulatory subunit of SCN9A/Nav1.7. Interacts with SCN10A; regulatory subunit of SCN10A/Nav1.8. Interacts with TNR; may play a crucial role in clustering and regulation of activity of SCN2B-containing Nav channels at nodes of Ranvier.

It is found in the cell membrane. Its subcellular location is the cell projection. The protein resides in the axon. Regulatory subunit of multiple voltage-gated sodium (Nav) channels directly mediating the depolarization of excitable membranes. Navs, also called VGSCs (voltage-gated sodium channels) or VDSCs (voltage-dependent sodium channels), operate by switching between closed and open conformations depending on the voltage difference across the membrane. In the open conformation they allow Na(+) ions to selectively pass through the pore, along their electrochemical gradient. The influx of Na+ ions provokes membrane depolarization, initiating the propagation of electrical signals throughout cells and tissues. The accessory beta subunits participate in localization and functional modulation of the Nav channels. Modulates the activity of SCN1A/Nav1.1, SCN2A/Nav1.2, SCN2A/Nav1.3, SCN5A/Nav1.5, SCN8A/Nav1.6, SCN9A/Nav1.7 and SCN10A/Nav1.8. This is Sodium channel regulatory subunit beta-2 from Rattus norvegicus (Rat).